We begin with the raw amino-acid sequence, 255 residues long: Uracil-DNA glycosylase (255 aa).

Residue Asp90 is the Proton acceptor of the active site.

It belongs to the uracil-DNA glycosylase (UDG) superfamily. UNG family.

It localises to the host nucleus. It carries out the reaction Hydrolyzes single-stranded DNA or mismatched double-stranded DNA and polynucleotides, releasing free uracil.. In terms of biological role, excises uracil residues from the DNA which can arise as a result of misincorporation of dUMP residues by DNA polymerase or deamination of cytosines. Therefore may reduce deleterious uracil incorporation into the viral genome, particularly in terminally differentiated cells which lack DNA repair enzymes. The protein is Uracil-DNA glycosylase of Equine herpesvirus 2 (strain 86/87) (EHV-2).